Here is an 80-residue protein sequence, read N- to C-terminus: Small pacifastin protease inhibitor (80 aa).

Positions 1–24 (MSKVLKVGLLLLLVAVAASAYAVA) are cleaved as a signal peptide. Residues 25–47 (EENGAPKENKQLPQIDDYGVTNK) constitute a propeptide that is removed on maturation. In terms of domain architecture, Pacifastin spans 45 to 80 (TNKCPANQPFKWNCNYCTCGPEGKDASCTRMACPQH). 3 disulfide bridges follow: Cys48-Cys63, Cys58-Cys77, and Cys61-Cys72.

Belongs to the protease inhibitor I19 family. In terms of tissue distribution, expressed in the venom apparatus. Low transcript levels are also detected in other tissues.

Its subcellular location is the secreted. Functionally, parasitic wasp protein that may interfere with the host immune response. The recombinant protein inhibits trypsin activity and prophenoloxidase (PPO) activation, an enzyme essential for both clotting and insect innate immune responses. It does not inhibit activity of chymotrypsin and protease K, and has no effect on phenoloxidase (PO) activity. The sequence is that of Small pacifastin protease inhibitor from Nasonia vitripennis (Parasitic wasp).